Reading from the N-terminus, the 187-residue chain is Elongation factor P (187 aa).

It belongs to the elongation factor P family.

It localises to the cytoplasm. It participates in protein biosynthesis; polypeptide chain elongation. Functionally, involved in peptide bond synthesis. Stimulates efficient translation and peptide-bond synthesis on native or reconstituted 70S ribosomes in vitro. Probably functions indirectly by altering the affinity of the ribosome for aminoacyl-tRNA, thus increasing their reactivity as acceptors for peptidyl transferase. The sequence is that of Elongation factor P from Parvibaculum lavamentivorans (strain DS-1 / DSM 13023 / NCIMB 13966).